The chain runs to 371 residues: Chaperone protein DnaJ (371 aa).

The region spanning 5-69 (DYYEVLGLSK…QKRAQYDQFG (65 aa)) is the J domain. The CR-type zinc-finger motif lies at 133-215 (GKELNVEIPV…CHGSGKVRKR (83 aa)). 8 residues coordinate Zn(2+): Cys146, Cys149, Cys163, Cys166, Cys189, Cys192, Cys203, and Cys206. CXXCXGXG motif repeat units lie at residues 146–153 (CDTCKGSG), 163–170 (CKHCSGSG), 189–196 (CSHCSGTG), and 203–210 (CTTCHGSG).

It belongs to the DnaJ family. In terms of assembly, homodimer. Zn(2+) serves as cofactor.

Its subcellular location is the cytoplasm. Its function is as follows. Participates actively in the response to hyperosmotic and heat shock by preventing the aggregation of stress-denatured proteins and by disaggregating proteins, also in an autonomous, DnaK-independent fashion. Unfolded proteins bind initially to DnaJ; upon interaction with the DnaJ-bound protein, DnaK hydrolyzes its bound ATP, resulting in the formation of a stable complex. GrpE releases ADP from DnaK; ATP binding to DnaK triggers the release of the substrate protein, thus completing the reaction cycle. Several rounds of ATP-dependent interactions between DnaJ, DnaK and GrpE are required for fully efficient folding. Also involved, together with DnaK and GrpE, in the DNA replication of plasmids through activation of initiation proteins. The sequence is that of Chaperone protein DnaJ from Bacillus cereus (strain AH820).